The following is a 352-amino-acid chain: Selenide, water dikinase (352 aa).

Cysteine 23 is an active-site residue. ATP contacts are provided by residues lysine 26 and 54-56 (SRD). Residue aspartate 57 coordinates Mg(2+). Residues aspartate 74, aspartate 97, and 145 to 147 (GHS) each bind ATP. Aspartate 97 contributes to the Mg(2+) binding site. Aspartate 233 is a binding site for Mg(2+).

This sequence belongs to the selenophosphate synthase 1 family. Class I subfamily. In terms of assembly, homodimer. The cofactor is Mg(2+).

The enzyme catalyses hydrogenselenide + ATP + H2O = selenophosphate + AMP + phosphate + 2 H(+). In terms of biological role, synthesizes selenophosphate from selenide and ATP. This chain is Selenide, water dikinase, found in Shewanella sp. (strain MR-4).